A 105-amino-acid chain; its full sequence is Protein FAM24A (105 aa).

Positions 1–32 (MAKMFDLRTKIMIGIGSSLLVAAMVLLSVVFC) are cleaved as a signal peptide.

Belongs to the FAM24 family.

It is found in the secreted. In Homo sapiens (Human), this protein is Protein FAM24A (FAM24A).